Here is a 382-residue protein sequence, read N- to C-terminus: ATP phosphoribosyltransferase regulatory subunit (382 aa).

The protein belongs to the class-II aminoacyl-tRNA synthetase family. HisZ subfamily. Heteromultimer composed of HisG and HisZ subunits.

The protein localises to the cytoplasm. Its pathway is amino-acid biosynthesis; L-histidine biosynthesis; L-histidine from 5-phospho-alpha-D-ribose 1-diphosphate: step 1/9. Its function is as follows. Required for the first step of histidine biosynthesis. May allow the feedback regulation of ATP phosphoribosyltransferase activity by histidine. The protein is ATP phosphoribosyltransferase regulatory subunit of Verminephrobacter eiseniae (strain EF01-2).